The primary structure comprises 81 residues: Putative membrane protein insertion efficiency factor (81 aa).

Positions N61 to E81 are disordered.

Belongs to the UPF0161 family.

The protein localises to the cell inner membrane. Functionally, could be involved in insertion of integral membrane proteins into the membrane. The chain is Putative membrane protein insertion efficiency factor from Pseudomonas putida (strain ATCC 700007 / DSM 6899 / JCM 31910 / BCRC 17059 / LMG 24140 / F1).